The sequence spans 91 residues: Probable Fe(2+)-trafficking protein (91 aa).

The protein belongs to the Fe(2+)-trafficking protein family.

Could be a mediator in iron transactions between iron acquisition and iron-requiring processes, such as synthesis and/or repair of Fe-S clusters in biosynthetic enzymes. This is Probable Fe(2+)-trafficking protein from Mannheimia succiniciproducens (strain KCTC 0769BP / MBEL55E).